The following is a 613-amino-acid chain: Dihydroxy-acid dehydratase (613 aa).

Asp-81 contributes to the Mg(2+) binding site. Cys-122 provides a ligand contact to [2Fe-2S] cluster. Residues Asp-123 and Lys-124 each contribute to the Mg(2+) site. The residue at position 124 (Lys-124) is an N6-carboxylysine. Residue Cys-193 coordinates [2Fe-2S] cluster. Residue Glu-489 coordinates Mg(2+). The Proton acceptor role is filled by Ser-515.

It belongs to the IlvD/Edd family. Homodimer. [2Fe-2S] cluster is required as a cofactor. Requires Mg(2+) as cofactor.

The catalysed reaction is (2R)-2,3-dihydroxy-3-methylbutanoate = 3-methyl-2-oxobutanoate + H2O. It carries out the reaction (2R,3R)-2,3-dihydroxy-3-methylpentanoate = (S)-3-methyl-2-oxopentanoate + H2O. The protein operates within amino-acid biosynthesis; L-isoleucine biosynthesis; L-isoleucine from 2-oxobutanoate: step 3/4. It functions in the pathway amino-acid biosynthesis; L-valine biosynthesis; L-valine from pyruvate: step 3/4. Functionally, functions in the biosynthesis of branched-chain amino acids. Catalyzes the dehydration of (2R,3R)-2,3-dihydroxy-3-methylpentanoate (2,3-dihydroxy-3-methylvalerate) into 2-oxo-3-methylpentanoate (2-oxo-3-methylvalerate) and of (2R)-2,3-dihydroxy-3-methylbutanoate (2,3-dihydroxyisovalerate) into 2-oxo-3-methylbutanoate (2-oxoisovalerate), the penultimate precursor to L-isoleucine and L-valine, respectively. The protein is Dihydroxy-acid dehydratase of Pseudomonas putida (strain ATCC 700007 / DSM 6899 / JCM 31910 / BCRC 17059 / LMG 24140 / F1).